We begin with the raw amino-acid sequence, 239 residues long: Ribonuclease PH (239 aa).

Phosphate contacts are provided by residues Arg86 and 124–126 (GTR).

It belongs to the RNase PH family. As to quaternary structure, homohexameric ring arranged as a trimer of dimers.

The catalysed reaction is tRNA(n+1) + phosphate = tRNA(n) + a ribonucleoside 5'-diphosphate. In terms of biological role, phosphorolytic 3'-5' exoribonuclease that plays an important role in tRNA 3'-end maturation. Removes nucleotide residues following the 3'-CCA terminus of tRNAs; can also add nucleotides to the ends of RNA molecules by using nucleoside diphosphates as substrates, but this may not be physiologically important. Probably plays a role in initiation of 16S rRNA degradation (leading to ribosome degradation) during starvation. The polypeptide is Ribonuclease PH (Cupriavidus necator (strain ATCC 17699 / DSM 428 / KCTC 22496 / NCIMB 10442 / H16 / Stanier 337) (Ralstonia eutropha)).